Here is a 180-residue protein sequence, read N- to C-terminus: Large ribosomal subunit protein uL6 (180 aa).

The protein belongs to the universal ribosomal protein uL6 family. As to quaternary structure, part of the 50S ribosomal subunit.

Functionally, this protein binds to the 23S rRNA, and is important in its secondary structure. It is located near the subunit interface in the base of the L7/L12 stalk, and near the tRNA binding site of the peptidyltransferase center. The sequence is that of Large ribosomal subunit protein uL6 from Protochlamydia amoebophila (strain UWE25).